Consider the following 217-residue polypeptide: Gas vesicle protein F2 (217 aa).

It belongs to the gas vesicle GvpF/GvpL family. As to quaternary structure, binds GvpA.

It localises to the gas vesicle. The protein localises to the cytoplasm. Its function is as follows. A minor component of the gas vesicle, may be involved in preventing GvpA aggregation during gas vesicle nucleation. Gas vesicles are hollow, gas filled proteinaceous nanostructures found in several microbial planktonic microorganisms. They allow positioning of halobacteria at the optimal depth for growth in the poorly aerated, shallow brine pools of their habitat. Expression of 2 c-vac DNA fragments containing 2 divergently transcribed regions (gvpE-gvpF-gvpG-gvpH-gvpI-gvpJ-gvpK-gvpL-gvpM and gvpA-gvpC-gvpN-gvpO) allows H.volcanii to produce gas vesicles. Note that gvpD is not necessary for gas vesicle formation. The sequence is that of Gas vesicle protein F2 from Halobacterium salinarum (strain ATCC 700922 / JCM 11081 / NRC-1) (Halobacterium halobium).